We begin with the raw amino-acid sequence, 187 residues long: dTTP/UTP pyrophosphatase (187 aa).

Asp65 (proton acceptor) is an active-site residue.

This sequence belongs to the Maf family. YhdE subfamily. The cofactor is a divalent metal cation.

The protein localises to the cytoplasm. It catalyses the reaction dTTP + H2O = dTMP + diphosphate + H(+). The catalysed reaction is UTP + H2O = UMP + diphosphate + H(+). Its function is as follows. Nucleoside triphosphate pyrophosphatase that hydrolyzes dTTP and UTP. May have a dual role in cell division arrest and in preventing the incorporation of modified nucleotides into cellular nucleic acids. The polypeptide is dTTP/UTP pyrophosphatase (Deinococcus geothermalis (strain DSM 11300 / CIP 105573 / AG-3a)).